The chain runs to 154 residues: Ribonuclease 1 (154 aa).

This sequence belongs to the BetVI family.

It localises to the cytoplasm. Its function is as follows. Catalyzes the two-stage endonucleolytic cleavage to 3'-phosphomononucleotides and 3'-phosphooligonucleotides with 2',3'-cyclic phosphate intermediates. This chain is Ribonuclease 1, found in Panax ginseng (Korean ginseng).